The chain runs to 141 residues: Galactose-6-phosphate isomerase subunit LacA 1 (141 aa).

The protein belongs to the LacAB/RpiB family. Heteromultimeric protein consisting of LacA and LacB.

The catalysed reaction is aldehydo-D-galactose 6-phosphate = keto-D-tagatose 6-phosphate. It participates in carbohydrate metabolism; D-galactose 6-phosphate degradation; D-tagatose 6-phosphate from D-galactose 6-phosphate: step 1/1. In Streptococcus pyogenes serotype M18 (strain MGAS8232), this protein is Galactose-6-phosphate isomerase subunit LacA 1.